Consider the following 212-residue polypeptide: Uracil phosphoribosyltransferase (212 aa).

5-phospho-alpha-D-ribose 1-diphosphate-binding positions include Arg-78, Arg-103, and 130–138; that span reads DPMLATGGS. Residues Ile-193 and 198–200 each bind uracil; that span reads GDA. Asp-199 contacts 5-phospho-alpha-D-ribose 1-diphosphate.

It belongs to the UPRTase family. Mg(2+) is required as a cofactor.

It catalyses the reaction UMP + diphosphate = 5-phospho-alpha-D-ribose 1-diphosphate + uracil. Its pathway is pyrimidine metabolism; UMP biosynthesis via salvage pathway; UMP from uracil: step 1/1. Its activity is regulated as follows. Allosterically activated by GTP. Catalyzes the conversion of uracil and 5-phospho-alpha-D-ribose 1-diphosphate (PRPP) to UMP and diphosphate. This is Uracil phosphoribosyltransferase from Stutzerimonas stutzeri (strain A1501) (Pseudomonas stutzeri).